The sequence spans 236 residues: Exosome complex component Rrp4 (236 aa).

An S1 motif domain is found at 64–133; the sequence is GDKVIGKIIE…EIKESWLTLK (70 aa). The KH domain maps to 141–199; that stretch reads EGGHMVLIHASRVPRVIGKGGGMVNMVKELTSTRIIIGQNGLIWIDGPIEGVTMAIAAI.

The protein belongs to the RRP4 family. In terms of assembly, component of the archaeal exosome complex. Forms a trimer of Rrp4 and/or Csl4 subunits. The trimer associates with a hexameric ring-like arrangement composed of 3 Rrp41-Rrp42 heterodimers.

The protein localises to the cytoplasm. Non-catalytic component of the exosome, which is a complex involved in RNA degradation. Increases the RNA binding and the efficiency of RNA degradation. Confers strong poly(A) specificity to the exosome. The protein is Exosome complex component Rrp4 of Thermoplasma volcanium (strain ATCC 51530 / DSM 4299 / JCM 9571 / NBRC 15438 / GSS1).